A 145-amino-acid chain; its full sequence is Large ribosomal subunit protein uL13 (145 aa).

The protein belongs to the universal ribosomal protein uL13 family. As to quaternary structure, part of the 50S ribosomal subunit.

Its function is as follows. This protein is one of the early assembly proteins of the 50S ribosomal subunit, although it is not seen to bind rRNA by itself. It is important during the early stages of 50S assembly. This is Large ribosomal subunit protein uL13 from Listeria monocytogenes serotype 4b (strain CLIP80459).